We begin with the raw amino-acid sequence, 427 residues long: MTIPTEISCPEEDAFQLLDKFSWFPSDDQRRWWEYTGPYLLKLLRDAKYPQKDQVPCLYLLQQLLVPYLGTFPVVGQAPLPWWSNVTTYGVPFELSWNLLHNIVRIGFEPLSHLAESGVDAFNKTAPEECVSRLACLDNTIDLARFRHFQHHLLVTPEEETWLLKEKAPLAKSGRGQQTLAVEFQNGGISAKAYFFPGMKSLATGLSPGKLILDSIERLALPGLKEPVHHLRSTLGLQDDGHPTDTAIAPFLLGVDLCTPERSRLKFYVTDQVVSWDRVADMWTLRGKRLEDPQCADGLALLRKLWDLLAIPEGYRSNIRPDFAFGTPPPEDYRPVMMANWTLSPKKKFPDPQIYLLTVGMNDAVVMDALVAFYEVLGWTDLASTYKDKVASYFPGPDFTKTNYIHSGVSFSYRHSKPYLSVYYSPF.

A substrate-binding site is contributed by Glu-94. Dimethylallyl diphosphate-binding residues include Arg-105, Lys-192, Tyr-194, Tyr-268, Gln-353, Tyr-355, Tyr-419, and Tyr-423.

This sequence belongs to the tryptophan dimethylallyltransferase family.

The enzyme catalyses 12alpha,13alpha-dihydroxyfumitremorgin C + dimethylallyl diphosphate = fumitremorgin B + diphosphate. The protein operates within mycotoxin biosynthesis. 12-alpha,13-alpha-dihydroxyfumitremorgin C prenyltransferase; part of the gene cluster that mediates the biosynthesis of fumitremorgins, indole alkaloids that carry not only intriguing chemical structures, but also interesting biological and pharmacological activities. The biosynthesis of fumitremorgin-type alkaloids begins by condensation of the two amino acids L-tryptophan and L-proline to brevianamide F, catalyzed by the non-ribosomal peptide synthetase ftmA. Brevianamide F is then prenylated by the prenyltransferase ftmPT1/ftmB in the presence of dimethylallyl diphosphate, resulting in the formation of tryprostatin B. The three cytochrome P450 monooxygenases, ftmP450-1/ftmC, ftmP450-2/ftmE and ftmP450-3/FtmG, are responsible for the conversion of tryprostatin B to 6-hydroxytryprostatin B, tryprostatin A to fumitremorgin C and fumitremorgin C to 12,13-dihydroxyfumitremorgin C, respectively. The putative methyltransferase ftmMT/ftmD is expected for the conversion of 6-hydroxytryprostatin B to tryprostatin A. FtmPT2/FtmH catalyzes the prenylation of 12,13-dihydroxyfumitre-morgin C in the presence of dimethylallyl diphosphate, resulting in the formation of fumitremorgin B. Fumitremorgin B is further converted to verruculogen by ftmOx1/ftmF via the insertion of an endoperoxide bond between the two prenyl moieties. In some fungal species, verruculogen is further converted to fumitremorgin A, but the enzymes involved in this step have not been identified yet. This chain is 12-alpha,13-alpha-dihydroxyfumitremorgin C prenyltransferase, found in Aspergillus fumigatus (strain ATCC MYA-4609 / CBS 101355 / FGSC A1100 / Af293) (Neosartorya fumigata).